The following is a 1098-amino-acid chain: MLEGDLASKMLRAVLQSHKNGVALPRLQGEYRSLTGDWIPFKQLGFPTLEAYLRSVPAVVRIETSRSGEITCYAMACTETARIAQLVARQRSSKRKTGRQVNCQMRVKKTMPFFLEGKPKATLRQPGFASNFSVGKKPNLAPLRDKGNSAVVKPDAEISPCMLHTTLGNEAFKDIPVQRHVTMSTNNRFSPKASLQPPLQMHLSRTSTKEMSDNLNQTVEKPNVTPPASYTYKMDEVQNRIKEILNKHNNGIWISKLPHFYKELYKEDLNQGILQQFEHWPHICTVEKPCSGGQDLLLYPAKRKQLLRSELDTEKVPLSPLPGPKQTPPLKGCPTVMAGDFKEKVADLLVKYTSGLWASALPKAFEEMYKVKFPEDALKNLASLSDVCSIDYISGNPQKAILYAKLPLPTDKIQKDAEQAHGDHDIKAMVEQEYLQLEENIAESANTFMEYITVPPLMIPTEASPSVLVVELSNTNEVVIRYVGKDYSAAQELMEDEMKEYYSKNPKVTPVQAVNVGQLLAVNAEEDAWLRAQVISTEENKIKVCYVDYGFSENVEKSKAYKLNPKFCSLSFQATKCKLAGLEVLSDDPDLVKVVESLTCGKIFAVEILDKADIPLVVLYDTSGEDDININATCLKAICDKSLEVHLQVDAMYTNVKVTNICSDGTLYCQVPCKGLNKLSDLLRKIEDYFHCKHMTSECFVSLPFCGKICLFHCKGKWLRVEITNVHSSRALDVQFLDSGTVTSVKVSELREIPPRFLQEMIAIPPQAIKCCLADLPQSIGMWTPDAVLWLRDSVLNCSDCSIKVTKVDETRGIAHVYLFTPKNFPDPHRSINRQITNADLWKHQKDVFLSAISSGAGSPNSKNGNMRVSGDTGENFRKNLTDVIKKSMMDHTSSFSTEELPPPVHLSKPGEHMDVYVPVACHPGYFVIQPWQEIHKLEVLMEEMILYYSVSEERHIAVEKDQVYAAKVENKWHRVLLKGILTNGLVSVYELDYGKHELVNIRKVQPLADMFRKLPFQAVTAQLAGVKCTQWSEEASMVFRNRVEKKPLVALVQTVIENANPWDRKVVVYLVDTSLPDTDIWIHDFMSEYLIELSKVN.

2 HTH OST-type domains span residues 3 to 76 (EGDL…YAMA) and 233 to 302 (KMDE…YPAK). Ser-319 carries the phosphoserine modification. The HTH OST-type 3 domain occupies 337-406 (MAGDFKEKVA…PQKAILYAKL (70 aa)). Tudor domains are found at residues 513-570 (AVNV…FCSL) and 703-760 (LPFC…FLQE). Residue Ser-859 is modified to Phosphoserine. Residues 861–1098 (NSKNGNMRVS…EYLIELSKVN (238 aa)) form an interaction with CDK17 region. Residues 893–1098 (TSSFSTEELP…EYLIELSKVN (206 aa)) form an interaction with CABLES1 region.

Belongs to the TDRD7 family. In terms of assembly, found in a mRNP complex, at least composed of TDRD1, TDRD6, TDRD7 and DDX4. Found in a complex containing CABLES1, CDK16 and CDK17. Interacts with CABLES1, CDK17 and PIWIL1.

It localises to the cytoplasm. Component of specific cytoplasmic RNA granules involved in post-transcriptional regulation of specific genes: probably acts by binding to specific mRNAs and regulating their translation. Required for lens transparency during lens development, by regulating translation of genes such as CRYBB3 and HSPB1 in the developing lens. Also required during spermatogenesis. This is Tudor domain-containing protein 7 (TDRD7) from Pongo abelii (Sumatran orangutan).